The following is a 249-amino-acid chain: Triosephosphate isomerase (249 aa).

12 to 14 (NWK) is a binding site for substrate. The active-site Electrophile is the His-96. Residue Glu-166 is the Proton acceptor of the active site. Substrate-binding positions include Gly-172, Ser-211, and 232-233 (GG).

Belongs to the triosephosphate isomerase family. As to quaternary structure, homodimer.

It is found in the cytoplasm. It carries out the reaction D-glyceraldehyde 3-phosphate = dihydroxyacetone phosphate. It participates in carbohydrate biosynthesis; gluconeogenesis. Its pathway is carbohydrate degradation; glycolysis; D-glyceraldehyde 3-phosphate from glycerone phosphate: step 1/1. Involved in the gluconeogenesis. Catalyzes stereospecifically the conversion of dihydroxyacetone phosphate (DHAP) to D-glyceraldehyde-3-phosphate (G3P). The polypeptide is Triosephosphate isomerase (Xanthobacter flavus).